The primary structure comprises 22 residues: FKGGGPYGQGVTRGQDLSGKDF.

The tract at residues 1-22 (FKGGGPYGQGVTRGQDLSGKDF) is disordered.

This sequence to A.thaliana At2g44920.

The protein resides in the plastid. Its subcellular location is the chloroplast thylakoid lumen. In Spinacia oleracea (Spinach), this protein is Thylakoid lumenal 11 kDa protein.